The primary structure comprises 462 residues: Cysteine--tRNA ligase (462 aa).

C28 is a binding site for Zn(2+). The 'HIGH' region motif lies at 30 to 40 (VTIYDLCHIGH). Residues C211, H236, and E240 each contribute to the Zn(2+) site. A 'KMSKS' region motif is present at residues 268 to 272 (KMSKS). K271 provides a ligand contact to ATP.

This sequence belongs to the class-I aminoacyl-tRNA synthetase family. In terms of assembly, monomer. It depends on Zn(2+) as a cofactor.

The protein resides in the cytoplasm. It catalyses the reaction tRNA(Cys) + L-cysteine + ATP = L-cysteinyl-tRNA(Cys) + AMP + diphosphate. This Aliivibrio salmonicida (strain LFI1238) (Vibrio salmonicida (strain LFI1238)) protein is Cysteine--tRNA ligase.